The following is a 672-amino-acid chain: Threonine--tRNA ligase (672 aa).

In terms of domain architecture, TGS spans 2–60 (SEPKNILLTVDGELREVTHGTTGLDLFREKPTTAVMRVDGLLWDLAREIPAGASVESVD). The segment at 260 to 567 (DHRKLGAELD…LTEHYAGAFP (308 aa)) is catalytic. Residues cysteine 366, histidine 417, and histidine 544 each contribute to the Zn(2+) site.

The protein belongs to the class-II aminoacyl-tRNA synthetase family. Homodimer. It depends on Zn(2+) as a cofactor.

The protein localises to the cytoplasm. The catalysed reaction is tRNA(Thr) + L-threonine + ATP = L-threonyl-tRNA(Thr) + AMP + diphosphate + H(+). Functionally, catalyzes the attachment of threonine to tRNA(Thr) in a two-step reaction: L-threonine is first activated by ATP to form Thr-AMP and then transferred to the acceptor end of tRNA(Thr). Also edits incorrectly charged L-seryl-tRNA(Thr). The sequence is that of Threonine--tRNA ligase from Micrococcus luteus (strain ATCC 4698 / DSM 20030 / JCM 1464 / CCM 169 / CCUG 5858 / IAM 1056 / NBRC 3333 / NCIMB 9278 / NCTC 2665 / VKM Ac-2230) (Micrococcus lysodeikticus).